An 840-amino-acid chain; its full sequence is Protein translocase subunit SecA (840 aa).

Residues Q87, 105 to 109 (GEGKT), and D494 contribute to the ATP site. The disordered stretch occupies residues 791–840 (LRKEQEDQPMFFGPAEGAGQKPQTRKDRKVGRNDPCPCGSGKKYKKCCGK). Zn(2+) contacts are provided by C826, C828, C837, and C838.

This sequence belongs to the SecA family. As to quaternary structure, monomer and homodimer. Part of the essential Sec protein translocation apparatus which comprises SecA, SecYEG and auxiliary proteins SecDF-YajC and YidC. Zn(2+) serves as cofactor.

Its subcellular location is the cell inner membrane. It is found in the cytoplasm. The catalysed reaction is ATP + H2O + cellular proteinSide 1 = ADP + phosphate + cellular proteinSide 2.. Its function is as follows. Part of the Sec protein translocase complex. Interacts with the SecYEG preprotein conducting channel. Has a central role in coupling the hydrolysis of ATP to the transfer of proteins into and across the cell membrane, serving as an ATP-driven molecular motor driving the stepwise translocation of polypeptide chains across the membrane. The chain is Protein translocase subunit SecA from Syntrophobacter fumaroxidans (strain DSM 10017 / MPOB).